We begin with the raw amino-acid sequence, 830 residues long: Periplasmic nitrate reductase (830 aa).

The segment at residues 1–31 (MKLSRRDFMKANAAVAAAAAAGMTIPTVAKA) is a signal peptide (tat-type signal). The 4Fe-4S Mo/W bis-MGD-type domain maps to 39–95 (IKWDKAPCRFCGTGCGVLVGTQNGRIVASQGDPDSPVNRGLNCIKGYFLPKIMYGKD). [4Fe-4S] cluster contacts are provided by Cys-46, Cys-49, Cys-53, and Cys-81. Mo-bis(molybdopterin guanine dinucleotide)-binding positions include Lys-83, Gln-150, Asn-175, Cys-179, 212–219 (WGSNMAEM), 243–247 (STYEH), 262–264 (QTD), Met-372, Gln-376, Asn-482, 508–509 (SD), Lys-531, Asp-558, and 718–727 (TGRVLEHWHT). Phe-794 provides a ligand contact to substrate. Residues Asn-802 and Lys-819 each contribute to the Mo-bis(molybdopterin guanine dinucleotide) site.

The protein belongs to the prokaryotic molybdopterin-containing oxidoreductase family. NasA/NapA/NarB subfamily. Component of the periplasmic nitrate reductase NapAB complex composed of NapA and NapB. Requires [4Fe-4S] cluster as cofactor. It depends on Mo-bis(molybdopterin guanine dinucleotide) as a cofactor. In terms of processing, predicted to be exported by the Tat system. The position of the signal peptide cleavage has not been experimentally proven.

The protein resides in the periplasm. The catalysed reaction is 2 Fe(II)-[cytochrome] + nitrate + 2 H(+) = 2 Fe(III)-[cytochrome] + nitrite + H2O. Catalytic subunit of the periplasmic nitrate reductase complex NapAB. Receives electrons from NapB and catalyzes the reduction of nitrate to nitrite. In Yersinia pestis bv. Antiqua (strain Antiqua), this protein is Periplasmic nitrate reductase.